We begin with the raw amino-acid sequence, 584 residues long: MIYIWICFYLQTTLLPCSLSTRTKFAICHNTSKLHRAAYKTSRWNIPGDVGSTPPPSKLHQALCLNEHSLSCMAELPMDYEGKIKETRHLLHLKGENDPIESLIFVDATLRLGVNHHFQKEIEEILRKSYATMKSPIICEYHTLHEVSLFFRLMRQHGRYVSADVFNNFKGESGRFKEELKRDTRGLVELYEAAQLSFEGERILDEAENFSRQILHGNLAGMEDNLRRSVGNKLRYPFHTSIARFTGRNYDDDLGGMYEWGKTLRELALMDLQVERSVYQEELLQVSKWWNELGLYKKLNLARNRPFEFYTWSMVILADYINLSEQRVELTKSVAFIYLIDDIFDVYGTLDELIIFTEAVNKWDYSATDTLPENMKMCCMTLLDTINGTSQKIYEKHGYNPIDSLKTTWKSLCSAFLVEAKWSASGSLPSANEYLENEKVSSGVYVVLVHLFCLMGLGGTSRGSIELNDTQELMSSIAIIFRLWNDLGSAKNEHQNGKDGSYLNCYKKEHINLTAAQAHEHALELVAIEWKRLNKESFNLNHDSVSSFKQAALNLARMVPLMYSYDHNQRGPVLEEYVKFMLSD.

Residues 1–45 (MIYIWICFYLQTTLLPCSLSTRTKFAICHNTSKLHRAAYKTSRWN) constitute a chloroplast transit peptide. Residues Asn30, Asn209, and Asn322 are each glycosylated (N-linked (GlcNAc...) asparagine). Positions 341 and 345 each coordinate Mg(2+). A DDXXD motif motif is present at residues 341–345 (DDIFD). N-linked (GlcNAc...) asparagine glycosylation is found at Asn387 and Asn468. Mg(2+)-binding residues include Asn485, Ser489, and Glu493. N-linked (GlcNAc...) asparagine glycosylation occurs at Asn512.

The protein belongs to the terpene synthase family. Tpsg subfamily. Requires Mg(2+) as cofactor. The cofactor is Mn(2+). In terms of tissue distribution, accumulates at low levels in flowers; mostly expressed in both upper and lower petal lobes, and, to a lower extent, in tube and stamens.

The protein resides in the plastid. It is found in the chloroplast stroma. It carries out the reaction (2E)-geranyl diphosphate = tricyclene + diphosphate. The catalysed reaction is (2E)-geranyl diphosphate = beta-myrcene + diphosphate. It participates in secondary metabolite biosynthesis; terpenoid biosynthesis. In terms of biological role, may contribute to floral scent emission. The chain is Tricyclene synthase 1e20, chloroplastic (1e20) from Antirrhinum majus (Garden snapdragon).